Consider the following 265-residue polypeptide: Tryptophan synthase alpha chain (265 aa).

Catalysis depends on proton acceptor residues E49 and D60.

It belongs to the TrpA family. As to quaternary structure, tetramer of two alpha and two beta chains.

The enzyme catalyses (1S,2R)-1-C-(indol-3-yl)glycerol 3-phosphate + L-serine = D-glyceraldehyde 3-phosphate + L-tryptophan + H2O. It functions in the pathway amino-acid biosynthesis; L-tryptophan biosynthesis; L-tryptophan from chorismate: step 5/5. Functionally, the alpha subunit is responsible for the aldol cleavage of indoleglycerol phosphate to indole and glyceraldehyde 3-phosphate. This is Tryptophan synthase alpha chain from Polynucleobacter necessarius subsp. necessarius (strain STIR1).